The sequence spans 393 residues: Formate-dependent phosphoribosylglycinamide formyltransferase (393 aa).

Residues glutamate 22 to leucine 23 and glutamate 82 each bind N(1)-(5-phospho-beta-D-ribosyl)glycinamide. ATP-binding positions include arginine 114, lysine 155, serine 160 to glutamine 165, glutamate 195 to valine 198, and glutamate 203. Positions arginine 119–leucine 308 constitute an ATP-grasp domain. Residues glutamate 267 and glutamate 279 each contribute to the Mg(2+) site. Residues aspartate 286, lysine 356, and arginine 363 to arginine 364 contribute to the N(1)-(5-phospho-beta-D-ribosyl)glycinamide site.

Belongs to the PurK/PurT family. As to quaternary structure, homodimer.

It catalyses the reaction N(1)-(5-phospho-beta-D-ribosyl)glycinamide + formate + ATP = N(2)-formyl-N(1)-(5-phospho-beta-D-ribosyl)glycinamide + ADP + phosphate + H(+). It participates in purine metabolism; IMP biosynthesis via de novo pathway; N(2)-formyl-N(1)-(5-phospho-D-ribosyl)glycinamide from N(1)-(5-phospho-D-ribosyl)glycinamide (formate route): step 1/1. Involved in the de novo purine biosynthesis. Catalyzes the transfer of formate to 5-phospho-ribosyl-glycinamide (GAR), producing 5-phospho-ribosyl-N-formylglycinamide (FGAR). Formate is provided by PurU via hydrolysis of 10-formyl-tetrahydrofolate. The chain is Formate-dependent phosphoribosylglycinamide formyltransferase from Maridesulfovibrio salexigens (strain ATCC 14822 / DSM 2638 / NCIMB 8403 / VKM B-1763) (Desulfovibrio salexigens).